Reading from the N-terminus, the 86-residue chain is Omega-theraphotoxin-Hhn1c (86 aa).

Positions 1 to 21 (MKSIVFVALFGLALLAVVCSA) are cleaved as a signal peptide. Positions 22–50 (SEDAHKELLKEVVRAMVVDKTDAVQAEER) are excised as a propeptide. Intrachain disulfides connect Cys52-Cys66, Cys59-Cys71, and Cys65-Cys78.

This sequence belongs to the neurotoxin 10 (Hwtx-1) family. 17 (Hntx-9) subfamily. Expressed by the venom gland.

It is found in the secreted. Its function is as follows. Ion channel inhibitor. This is Omega-theraphotoxin-Hhn1c from Cyriopagopus hainanus (Chinese bird spider).